A 244-amino-acid polypeptide reads, in one-letter code: Phosphoadenosine 5'-phosphosulfate reductase (244 aa).

Cys239 (nucleophile; cysteine thiosulfonate intermediate) is an active-site residue.

It belongs to the PAPS reductase family. CysH subfamily.

The protein localises to the cytoplasm. It catalyses the reaction [thioredoxin]-disulfide + sulfite + adenosine 3',5'-bisphosphate + 2 H(+) = [thioredoxin]-dithiol + 3'-phosphoadenylyl sulfate. Its pathway is sulfur metabolism; hydrogen sulfide biosynthesis; sulfite from sulfate: step 3/3. Functionally, catalyzes the formation of sulfite from phosphoadenosine 5'-phosphosulfate (PAPS) using thioredoxin as an electron donor. The sequence is that of Phosphoadenosine 5'-phosphosulfate reductase from Salmonella paratyphi A (strain AKU_12601).